Here is a 335-residue protein sequence, read N- to C-terminus: Ubiquinone biosynthesis protein COQ4, mitochondrial (335 aa).

A mitochondrion-targeting transit peptide spans 1-10; it reads MLRLSLLRST. Zn(2+) contacts are provided by histidine 210, aspartate 211, histidine 214, and glutamate 226.

It belongs to the COQ4 family. As to quaternary structure, component of a multi-subunit COQ enzyme complex, composed of at least COQ3, COQ4, COQ5, COQ6, COQ7 and COQ9. Interacts with COQ3. Requires Zn(2+) as cofactor.

The protein resides in the mitochondrion inner membrane. The enzyme catalyses 4-hydroxy-3-methoxy-5-(all-trans-hexaprenyl)benzoate + H(+) = 2-methoxy-6-(all-trans-hexaprenyl)phenol + CO2. It participates in cofactor biosynthesis; ubiquinone biosynthesis. Its function is as follows. Lyase that catalyzes the C1-decarboxylation of 4-hydroxy-3-methoxy-5-(all-trans-hexaprenyl)benzoic acid into 2-methoxy-6-(all-trans-hexaprenyl)phenol during ubiquinone biosynthesis. This chain is Ubiquinone biosynthesis protein COQ4, mitochondrial, found in Saccharomyces cerevisiae (strain AWRI1631) (Baker's yeast).